A 168-amino-acid chain; its full sequence is Photosystem I assembly protein Ycf3 (168 aa).

TPR repeat units lie at residues 35–68, 72–105, and 120–153; these read AFTY…EIDP, SYIL…NPFL, and GEQA…TPGN.

It belongs to the Ycf3 family.

It is found in the plastid. Its subcellular location is the chloroplast thylakoid membrane. Functionally, essential for the assembly of the photosystem I (PSI) complex. May act as a chaperone-like factor to guide the assembly of the PSI subunits. The polypeptide is Photosystem I assembly protein Ycf3 (Panax ginseng (Korean ginseng)).